The sequence spans 1005 residues: Mediator of RNA polymerase II transcription subunit 24 (1005 aa).

Belongs to the Mediator complex subunit 24 family. As to quaternary structure, component of the Mediator complex.

It localises to the nucleus. Functionally, component of the Mediator complex, a coactivator involved in the regulated transcription of nearly all RNA polymerase II-dependent genes. Mediator functions as a bridge to convey information from gene-specific regulatory proteins to the basal RNA polymerase II transcription machinery. Mediator is recruited to promoters by direct interactions with regulatory proteins and serves as a scaffold for the assembly of a functional preinitiation complex with RNA polymerase II and the general transcription factors. The polypeptide is Mediator of RNA polymerase II transcription subunit 24 (MED24) (Aedes aegypti (Yellowfever mosquito)).